A 434-amino-acid chain; its full sequence is 4-hydroxyphenylpyruvate dioxygenase (434 aa).

A disordered region spans residues Met-1 to His-21. Residues Thr-7–Pro-19 are compositionally biased toward low complexity. 2 consecutive VOC domains span residues Ser-41–Gly-192 and Arg-208–Lys-368. Positions 211, 293, and 379 each coordinate Fe cation.

Belongs to the 4HPPD family. Fe cation is required as a cofactor.

The protein localises to the cytoplasm. It carries out the reaction 3-(4-hydroxyphenyl)pyruvate + O2 = homogentisate + CO2. It functions in the pathway amino-acid degradation; L-phenylalanine degradation; acetoacetate and fumarate from L-phenylalanine: step 3/6. Its pathway is cofactor biosynthesis; prenylquinone biosynthesis. This chain is 4-hydroxyphenylpyruvate dioxygenase, found in Hordeum vulgare (Barley).